Here is a 441-residue protein sequence, read N- to C-terminus: MDIKVEEVSKLTRKVIVTLPAGDVQPKIEAAYNKLKKEVKIKGFRRGKVPSAIIVKNYKDQVEAELSEKLVQENYFNAVEKEGLDPVTHPEIQVVKYNEDGSFTFEAHVDVRPDFELGNYKGLEIEKPAVAVADEDIDAEIAEMQKKAAALHVVDRPAVDGDMVTVDFQGFENGEALAQVKSDDHQVDLGAGSMGKDFEAKLVGMSKGEVADHQITFPENHPNVIIKGKTIDFKLSVKDVKERILADLDDEFAKDAGEEFNSMDELKASIRARRIKKLEESAEGVISDRLMQKLLEGYEFEVPTRLVAHESEQMIKQTEQQLQQSGLTLEAAGLSKEKLVEENVEVAAQRVRGDFLLKKIAEVEDIKVADEDMDRGFKRIGDMYNMTVAQVKEFFQSRDDLLPFMNELLNEKILAFLRSEAVMVEEKAVEATDVQKEGASE.

In terms of domain architecture, PPIase FKBP-type spans Gly161–Ala246.

The protein belongs to the FKBP-type PPIase family. Tig subfamily.

It localises to the cytoplasm. It catalyses the reaction [protein]-peptidylproline (omega=180) = [protein]-peptidylproline (omega=0). Its function is as follows. Involved in protein export. Acts as a chaperone by maintaining the newly synthesized protein in an open conformation. Functions as a peptidyl-prolyl cis-trans isomerase. The protein is Trigger factor of Desulfotalea psychrophila (strain LSv54 / DSM 12343).